The chain runs to 265 residues: HUWE1-associated protein modifying stress responses (265 aa).

3 disordered regions span residues 1–22, 140–173, and 194–219; these read MEEK…HWFS, GKAP…SVET, and ISMR…RRNG. Low complexity predominate over residues 147-172; it reads SSRAPPRLAMVSPSRSTPSETSSSVE.

It belongs to the HAPSTR1 family. In terms of assembly, oligomer.

The protein localises to the nucleus. It localises to the cytoplasm. Its function is as follows. Acts as a central player within a network of stress response pathways promoting cellular adaptability. Functions as a negative regulator of TP53/P53 in the cellular response to telomere erosion and probably also DNA damage. This is HUWE1-associated protein modifying stress responses from Danio rerio (Zebrafish).